The chain runs to 65 residues: Large ribosomal subunit protein bL28 (65 aa).

Belongs to the bacterial ribosomal protein bL28 family.

The sequence is that of Large ribosomal subunit protein bL28 from Lachnoclostridium phytofermentans (strain ATCC 700394 / DSM 18823 / ISDg) (Clostridium phytofermentans).